A 428-amino-acid polypeptide reads, in one-letter code: UPF0597 protein PBPRB0240 (428 aa).

This sequence belongs to the UPF0597 family.

This Photobacterium profundum (strain SS9) protein is UPF0597 protein PBPRB0240.